The chain runs to 261 residues: Protein phosphatase inhibitor 2 (261 aa).

Residues 1–16 (MNKDEEFLEEHHYKDD) are compositionally biased toward basic and acidic residues. The tract at residues 1-150 (MNKDEEFLEE…TPYHYYESEE (150 aa)) is required for binding to pppB. Residues 1-261 (MNKDEEFLEE…LNANLSDDEQ (261 aa)) form a disordered region. The segment covering 17–60 (DAIEGEEEQGEEEESDLDDDMYNIDGETNDDDDDDEAEDEESSE) has biased composition (acidic residues). Polar residues predominate over residues 123–134 (LTINDMNKSSTM). Residues 150-242 (EETDESKKYL…KKFDNLRKAH (93 aa)) adopt a coiled-coil conformation. Over residues 154–163 (ESKKYLENKF) the composition is skewed to basic and acidic residues. The span at 195–206 (DKKKKKKNLKIH) shows a compositional bias: basic residues. The span at 212–225 (DDNDDNEDEDEDET) shows a compositional bias: acidic residues. Residues 226-250 (EEKKENKKKFDNLRKAHYNEFKVVR) show a composition bias toward basic and acidic residues.

The protein belongs to the protein phosphatase inhibitor 2 family. As to quaternary structure, interacts with pppB.

In terms of biological role, inhibitor of protein-phosphatase 1 (PP1). The protein is Protein phosphatase inhibitor 2 (dpiA) of Dictyostelium discoideum (Social amoeba).